We begin with the raw amino-acid sequence, 98 residues long: Small ribosomal subunit protein uS19 (98 aa).

Disordered regions lie at residues 1 to 30 and 78 to 98; these read MARS…KKSV and RTFH…PAKK. Residues 9–24 are compositionally biased toward basic and acidic residues; sequence PFADKHLTKKVEDANK.

The protein belongs to the universal ribosomal protein uS19 family.

In terms of biological role, protein S19 forms a complex with S13 that binds strongly to the 16S ribosomal RNA. This Anaeromyxobacter dehalogenans (strain 2CP-1 / ATCC BAA-258) protein is Small ribosomal subunit protein uS19.